The following is a 34-amino-acid chain: Peptide 9797 (34 aa).

Expressed by the venom gland.

It localises to the secreted. This Tityus stigmurus (Brazilian scorpion) protein is Peptide 9797.